Here is a 63-residue protein sequence, read N- to C-terminus: Cypmaclein (63 aa).

Belongs to the GASA family. As to expression, expressed in pollen (at protein level).

This chain is Cypmaclein, found in Cupressus sempervirens (Italian cypress).